The primary structure comprises 359 residues: Heme A synthase (359 aa).

5 consecutive transmembrane segments (helical) span residues 8–28, 94–114, 124–144, 159–179, and 215–235; these read IMSI…VVGG, LLGR…CYLK, LLLI…MVKS, GHLL…LIII, and IIIF…GLDA. Histidine 274 contacts heme. The next 3 helical transmembrane spans lie at 276–296, 303–323, and 328–348; these read WFGI…IILN, MGMV…ITLL, and ILAA…FLFI. Histidine 334 is a binding site for heme.

Belongs to the COX15/CtaA family. Type 2 subfamily. In terms of assembly, interacts with CtaB. The cofactor is heme b.

It is found in the cell membrane. The enzyme catalyses Fe(II)-heme o + 2 A + H2O = Fe(II)-heme a + 2 AH2. It functions in the pathway porphyrin-containing compound metabolism; heme A biosynthesis; heme A from heme O: step 1/1. Catalyzes the conversion of heme O to heme A by two successive hydroxylations of the methyl group at C8. The first hydroxylation forms heme I, the second hydroxylation results in an unstable dihydroxymethyl group, which spontaneously dehydrates, resulting in the formyl group of heme A. The sequence is that of Heme A synthase from Orientia tsutsugamushi (strain Boryong) (Rickettsia tsutsugamushi).